A 398-amino-acid chain; its full sequence is Autophagy protein 5 (398 aa).

A disordered region spans residues 99–147; it reads NSNNNNNNNNNNNNNNNNNNNNNNNNNNNNNNNNNNNNNNNNNNNNNNN. Lysine 187 participates in a covalent cross-link: Glycyl lysine isopeptide (Lys-Gly) (interchain with G-Cter in ATG12). The disordered stretch occupies residues 292 to 321; that stretch reads NNNNINNNSPPLSPNSNNNNNNNNVDNSIE.

The protein belongs to the ATG5 family. In terms of processing, conjugated to atg12; which is essential for autophagy.

The protein resides in the cytoplasm. It localises to the preautophagosomal structure membrane. In terms of biological role, involved in autophagic vesicle formation. Conjugation with atg12, through a ubiquitin-like conjugating system involving atg7 as an E1-like activating enzyme and atg10 as an E2-like conjugating enzyme, is essential for its function. The atg12-atg5 conjugate acts as an E3-like enzyme which is required for lipidation of atg8 and its association to the vesicle membranes. The polypeptide is Autophagy protein 5 (atg5) (Dictyostelium discoideum (Social amoeba)).